The chain runs to 111 residues: C-type lectin lectoxin-Enh2 (111 aa).

An N-terminal signal peptide occupies residues 1-23 (MGQFTVVSLGLLAMFLSLSGAKG). An intrachain disulfide couples cysteine 26 to cysteine 37. A C-type lectin domain is found at 33–108 (RNGVCNKLFP…CASLHPFICQ (76 aa)). Residues 72–74 (EPN) carry the Mannose-binding motif. Ca(2+)-binding residues include glutamate 80, asparagine 95, and aspartate 96. A disulfide bridge links cysteine 82 with cysteine 99.

It belongs to the true venom lectin family. Expressed by the venom gland.

It localises to the secreted. Functionally, mannose-binding lectin which recognizes specific carbohydrate structures and agglutinates a variety of animal cells by binding to cell-surface glycoproteins and glycolipids. May be a calcium-dependent lectin. This chain is C-type lectin lectoxin-Enh2, found in Pseudoferania polylepis (Macleay's water snake).